We begin with the raw amino-acid sequence, 107 residues long: Putative double-stranded DNA mimic protein NTHI1680 (107 aa).

Belongs to the putative dsDNA mimic protein family.

In terms of biological role, may act as a double-stranded DNA (dsDNA) mimic. Probably regulates the activity of a dsDNA-binding protein. The polypeptide is Putative double-stranded DNA mimic protein NTHI1680 (Haemophilus influenzae (strain 86-028NP)).